A 102-amino-acid chain; its full sequence is Large ribosomal subunit protein uL24 (102 aa).

This sequence belongs to the universal ribosomal protein uL24 family. Part of the 50S ribosomal subunit.

In terms of biological role, one of two assembly initiator proteins, it binds directly to the 5'-end of the 23S rRNA, where it nucleates assembly of the 50S subunit. Its function is as follows. One of the proteins that surrounds the polypeptide exit tunnel on the outside of the subunit. This is Large ribosomal subunit protein uL24 from Ralstonia nicotianae (strain ATCC BAA-1114 / GMI1000) (Ralstonia solanacearum).